Here is a 410-residue protein sequence, read N- to C-terminus: Dipeptidase 1 (410 aa).

Residues 1–16 form the signal peptide; it reads MVIIWWFWSLLAICAS. 2 residues coordinate Zn(2+): H36 and D38. A disulfide bond links C87 and C170. The N-linked (GlcNAc...) asparagine glycan is linked to N121. E141 provides a ligand contact to Zn(2+). H168 is a binding site for substrate. Residues H214 and H235 each coordinate Zn(2+). An intrachain disulfide couples C242 to C274. R246 is a substrate binding site. N258 carries N-linked (GlcNAc...) asparagine glycosylation. D304 is a substrate binding site. A glycan (N-linked (GlcNAc...) asparagine) is linked at N332. S384 carries GPI-anchor amidated serine lipidation. Residues 385 to 410 constitute a propeptide, removed in mature form; sequence QAHSIHLQTGALVASLASLLFRLHLL.

Belongs to the metallo-dependent hydrolases superfamily. Peptidase M19 family. As to quaternary structure, homodimer; disulfide-linked. Zn(2+) serves as cofactor. Expressed in heart, lung, skeletal muscle, kidney, liver, and testis. Not detected in brain and spleen.

Its subcellular location is the apical cell membrane. It is found in the cell projection. It localises to the microvillus membrane. It catalyses the reaction an L-aminoacyl-L-amino acid + H2O = 2 an L-alpha-amino acid. It carries out the reaction leukotriene D4 + H2O = leukotriene E4 + glycine. The enzyme catalyses L-cystine-bis-glycine + 2 H2O = L-cystine + 2 glycine. The catalysed reaction is a beta-lactam + H2O = a substituted beta-amino acid. It catalyses the reaction glycyldehydrophenylalanine + H2O = 2,3-didehydrophenylalanine + glycine. Its activity is regulated as follows. Inhibited by L-penicillamine. Inhibited by cilastatin. Its function is as follows. Hydrolyzes a wide range of dipeptides including the conversion of leukotriene D4 to leukotriene E4. Hydrolyzes cystinyl-bis-glycine (cys-bis-gly) formed during glutathione degradation. Also possesses beta lactamase activity and hydrolytically inactivates beta-lactam antibiotics. Independently of its dipeptidase activity, acts as an adhesion receptor for neutrophil recruitment from bloodstream into inflamed lungs and liver. This chain is Dipeptidase 1 (Dpep1), found in Mus musculus (Mouse).